A 275-amino-acid chain; its full sequence is NADPH-dependent 7-cyano-7-deazaguanine reductase (275 aa).

Position 81–83 (81–83 (IES)) interacts with substrate. Residue 83–84 (SK) participates in NADPH binding. The Thioimide intermediate role is filled by C181. The active-site Proton donor is the D188. 220-221 (HE) serves as a coordination point for substrate. 249–250 (RG) is an NADPH binding site.

Belongs to the GTP cyclohydrolase I family. QueF type 2 subfamily. As to quaternary structure, homodimer.

It localises to the cytoplasm. The enzyme catalyses 7-aminomethyl-7-carbaguanine + 2 NADP(+) = 7-cyano-7-deazaguanine + 2 NADPH + 3 H(+). The protein operates within tRNA modification; tRNA-queuosine biosynthesis. Its function is as follows. Catalyzes the NADPH-dependent reduction of 7-cyano-7-deazaguanine (preQ0) to 7-aminomethyl-7-deazaguanine (preQ1). The protein is NADPH-dependent 7-cyano-7-deazaguanine reductase of Xylella fastidiosa (strain M23).